Reading from the N-terminus, the 417-residue chain is UDP-N-acetylglucosamine 1-carboxyvinyltransferase (417 aa).

Residue 22 to 23 (KN) participates in phosphoenolpyruvate binding. Arg-91 serves as a coordination point for UDP-N-acetyl-alpha-D-glucosamine. Cys-115 acts as the Proton donor in catalysis. Cys-115 carries the post-translational modification 2-(S-cysteinyl)pyruvic acid O-phosphothioketal. UDP-N-acetyl-alpha-D-glucosamine is bound by residues 120-124 (RPVDL), Asp-304, and Ile-326.

This sequence belongs to the EPSP synthase family. MurA subfamily.

It is found in the cytoplasm. It carries out the reaction phosphoenolpyruvate + UDP-N-acetyl-alpha-D-glucosamine = UDP-N-acetyl-3-O-(1-carboxyvinyl)-alpha-D-glucosamine + phosphate. It functions in the pathway cell wall biogenesis; peptidoglycan biosynthesis. In terms of biological role, cell wall formation. Adds enolpyruvyl to UDP-N-acetylglucosamine. The protein is UDP-N-acetylglucosamine 1-carboxyvinyltransferase of Nitratidesulfovibrio vulgaris (strain DSM 19637 / Miyazaki F) (Desulfovibrio vulgaris).